A 762-amino-acid chain; its full sequence is Phosphoribosylformylglycinamidine synthase subunit PurL (762 aa).

The active site involves His-58. The ATP site is built by Tyr-61 and Arg-105. A Mg(2+)-binding site is contributed by Glu-107. Residues 108 to 111 (SHNH) and Arg-130 each bind substrate. His-109 (proton acceptor) is an active-site residue. Asp-131 serves as a coordination point for Mg(2+). Gln-255 is a substrate binding site. Asp-283 lines the Mg(2+) pocket. 327–329 (ESQ) is a binding site for substrate. 2 residues coordinate ATP: Asn-513 and Gly-550. Residue Asn-551 participates in Mg(2+) binding. A substrate-binding site is contributed by Ser-553.

Belongs to the FGAMS family. Monomer. Part of the FGAM synthase complex composed of 1 PurL, 1 PurQ and 2 PurS subunits.

It localises to the cytoplasm. It catalyses the reaction N(2)-formyl-N(1)-(5-phospho-beta-D-ribosyl)glycinamide + L-glutamine + ATP + H2O = 2-formamido-N(1)-(5-O-phospho-beta-D-ribosyl)acetamidine + L-glutamate + ADP + phosphate + H(+). Its pathway is purine metabolism; IMP biosynthesis via de novo pathway; 5-amino-1-(5-phospho-D-ribosyl)imidazole from N(2)-formyl-N(1)-(5-phospho-D-ribosyl)glycinamide: step 1/2. In terms of biological role, part of the phosphoribosylformylglycinamidine synthase complex involved in the purines biosynthetic pathway. Catalyzes the ATP-dependent conversion of formylglycinamide ribonucleotide (FGAR) and glutamine to yield formylglycinamidine ribonucleotide (FGAM) and glutamate. The FGAM synthase complex is composed of three subunits. PurQ produces an ammonia molecule by converting glutamine to glutamate. PurL transfers the ammonia molecule to FGAR to form FGAM in an ATP-dependent manner. PurS interacts with PurQ and PurL and is thought to assist in the transfer of the ammonia molecule from PurQ to PurL. This Corynebacterium glutamicum (strain ATCC 13032 / DSM 20300 / JCM 1318 / BCRC 11384 / CCUG 27702 / LMG 3730 / NBRC 12168 / NCIMB 10025 / NRRL B-2784 / 534) protein is Phosphoribosylformylglycinamidine synthase subunit PurL.